Reading from the N-terminus, the 383-residue chain is Homeobox protein SHOOT MERISTEMLESS (383 aa).

Residues 37-58 (HQQHHGHDQQHQHQQQHDGYAY) form a disordered region. An ELK domain is found at 263-283 (ELKGQLLRKYSGYLGSLKQEF). A DNA-binding region (homeobox; TALE-type) is located at residues 284–347 (MKKRKKGKLP…NQRKRHWKPS (64 aa)).

This sequence belongs to the TALE/KNOX homeobox family.

Its subcellular location is the nucleus. In terms of biological role, required for shoot apical meristem formation during embryogenesis. Probably binds to the DNA sequence 5'-TGAC-3'. The sequence is that of Homeobox protein SHOOT MERISTEMLESS (STM) from Brassica oleracea (Wild cabbage).